A 453-amino-acid polypeptide reads, in one-letter code: Allantoinase (453 aa).

Zn(2+) contacts are provided by His-59, His-61, Lys-146, His-186, His-242, and Asp-315. Lys-146 carries the N6-carboxylysine modification.

The protein belongs to the metallo-dependent hydrolases superfamily. Allantoinase family. Homotetramer. The cofactor is Zn(2+). In terms of processing, carboxylation allows a single lysine to coordinate two zinc ions.

The enzyme catalyses (S)-allantoin + H2O = allantoate + H(+). The protein operates within nitrogen metabolism; (S)-allantoin degradation; allantoate from (S)-allantoin: step 1/1. Its function is as follows. Catalyzes the conversion of allantoin (5-ureidohydantoin) to allantoic acid by hydrolytic cleavage of the five-member hydantoin ring. The sequence is that of Allantoinase from Escherichia coli O127:H6 (strain E2348/69 / EPEC).